The chain runs to 334 residues: Beta-glucanase (334 aa).

An N-terminal signal peptide occupies residues 1–27 (MKNRVISLLMASLLLVLSVIVAPFYKA). A GH16 domain is found at 28 to 248 (EAATVVNTPF…YVKYYPNGVP (221 aa)). Glu-136 acts as the Nucleophile in catalysis. Residue Glu-140 is the Proton donor of the active site. Residues 246 to 265 (GVPQDNPTPTPTIAPSTPTN) form a disordered region. The 68-residue stretch at 267 to 334 (NLPLKGDVNG…RYLIRAIPSL (68 aa)) folds into the Dockerin domain.

This sequence belongs to the glycosyl hydrolase 16 family.

It carries out the reaction Hydrolysis of (1-&gt;4)-beta-D-glucosidic linkages in beta-D-glucans containing (1-&gt;3)- and (1-&gt;4)-bonds.. The sequence is that of Beta-glucanase (licB) from Acetivibrio thermocellus (Hungateiclostridium thermocellum).